The chain runs to 252 residues: Chitooligosaccharide deacetylase (252 aa).

Residues His-61 and His-125 each contribute to the Mg(2+) site.

Belongs to the YdjC deacetylase family. ChbG subfamily. In terms of assembly, homodimer. It depends on Mg(2+) as a cofactor.

It localises to the cytoplasm. The catalysed reaction is N,N'-diacetylchitobiose + H2O = N-acetyl-beta-D-glucosaminyl-(1-&gt;4)-D-glucosamine + acetate. It carries out the reaction diacetylchitobiose-6'-phosphate + H2O = N'-monoacetylchitobiose-6'-phosphate + acetate. Its pathway is glycan degradation; chitin degradation. Functionally, involved in the degradation of chitin. ChbG is essential for growth on the acetylated chitooligosaccharides chitobiose and chitotriose but is dispensable for growth on cellobiose and chitosan dimer, the deacetylated form of chitobiose. Deacetylation of chitobiose-6-P and chitotriose-6-P is necessary for both the activation of the chb promoter by the regulatory protein ChbR and the hydrolysis of phosphorylated beta-glucosides by the phospho-beta-glucosidase ChbF. Catalyzes the removal of only one acetyl group from chitobiose-6-P to yield monoacetylchitobiose-6-P, the inducer of ChbR and the substrate of ChbF. The polypeptide is Chitooligosaccharide deacetylase (Salmonella paratyphi C (strain RKS4594)).